A 106-amino-acid polypeptide reads, in one-letter code: Pyrimidine/purine nucleoside phosphorylase (106 aa).

The protein belongs to the nucleoside phosphorylase PpnP family.

The catalysed reaction is a purine D-ribonucleoside + phosphate = a purine nucleobase + alpha-D-ribose 1-phosphate. The enzyme catalyses adenosine + phosphate = alpha-D-ribose 1-phosphate + adenine. It catalyses the reaction cytidine + phosphate = cytosine + alpha-D-ribose 1-phosphate. It carries out the reaction guanosine + phosphate = alpha-D-ribose 1-phosphate + guanine. The catalysed reaction is inosine + phosphate = alpha-D-ribose 1-phosphate + hypoxanthine. The enzyme catalyses thymidine + phosphate = 2-deoxy-alpha-D-ribose 1-phosphate + thymine. It catalyses the reaction uridine + phosphate = alpha-D-ribose 1-phosphate + uracil. It carries out the reaction xanthosine + phosphate = alpha-D-ribose 1-phosphate + xanthine. Its function is as follows. Catalyzes the phosphorolysis of diverse nucleosides, yielding D-ribose 1-phosphate and the respective free bases. Can use uridine, adenosine, guanosine, cytidine, thymidine, inosine and xanthosine as substrates. Also catalyzes the reverse reactions. The polypeptide is Pyrimidine/purine nucleoside phosphorylase (Burkholderia vietnamiensis (strain G4 / LMG 22486) (Burkholderia cepacia (strain R1808))).